Here is a 207-residue protein sequence, read N- to C-terminus: Frataxin, mitochondrial (207 aa).

The N-terminal 40 residues, M1 to G40, are a transit peptide targeting the mitochondrion.

This sequence belongs to the frataxin family. As to quaternary structure, component of the mitochondrial core iron-sulfur cluster (ISC) complex composed of NFS1, LYRM4, NDUFAB1, ISCU, FXN, and FDX2; this complex is a heterohexamer containing two copies of each monomer. Homodimer. Monomer (probable predominant form). Oligomer. Monomers and polymeric aggregates of &gt;1 MDa have been isolated from mitochondria. A small fraction of heterologous overexpressed recombinant frataxin forms high-molecular weight aggregates that incorporate iron. Interacts with LYRM4. Interacts (via ferrous form) with ISCU; the interaction is possible when both are bound to the dimeric form of the cysteine desulfurase complex (NFS1:LYRM4) and the interaction enhances FXN interaction to the dimeric form of the cysteine desulfurase complex (NFS1:LYRM4). Interacts with FECH; one iron-bound FXN monomer seems to interact with a FECH homodimer. Interacts with SDHA and SDHB. Interacts with ACO2; the interaction is dependent on citrate. Interacts with HSPA9. Component of a complex composed of FXN, NFS1, LYRM4 and ISCU. In terms of assembly, interacts with ACO1. Interacts with ISCU (cytoplasmic form). Processed in two steps by mitochondrial processing peptidase (MPP). MPP first cleaves the precursor to intermediate form and subsequently converts the intermediate to yield frataxin mature form (frataxin(81-210)) which is the predominant form. The additional forms, frataxin(56-210) and frataxin(78-210), seem to be produced when the normal maturation process is impaired; their physiological relevance is unsure. As to expression, heart, liver, skeletal muscle, kidney, spleen and thymus. Weakly expressed in the brain and lung.

The protein localises to the mitochondrion. It is found in the cytoplasm. It localises to the cytosol. It catalyses the reaction 4 Fe(2+) + O2 + 4 H(+) = 4 Fe(3+) + 2 H2O. Functions as an activator of persulfide transfer to the scaffoding protein ISCU as component of the core iron-sulfur cluster (ISC) assembly complex and participates to the [2Fe-2S] cluster assembly. Accelerates sulfur transfer from NFS1 persulfide intermediate to ISCU and to small thiols such as L-cysteine and glutathione leading to persulfuration of these thiols and ultimately sulfide release. Binds ferrous ion and is released from FXN upon the addition of both L-cysteine and reduced FDX2 during [2Fe-2S] cluster assembly. The core iron-sulfur cluster (ISC) assembly complex is involved in the de novo synthesis of a [2Fe-2S] cluster, the first step of the mitochondrial iron-sulfur protein biogenesis. This process is initiated by the cysteine desulfurase complex (NFS1:LYRM4:NDUFAB1) that produces persulfide which is delivered on the scaffold protein ISCU in a FXN-dependent manner. Then this complex is stabilized by FDX2 which provides reducing equivalents to accomplish the [2Fe-2S] cluster assembly. Finally, the [2Fe-2S] cluster is transferred from ISCU to chaperone proteins, including HSCB, HSPA9 and GLRX5. May play a role in the protection against iron-catalyzed oxidative stress through its ability to catalyze the oxidation of Fe(2+) to Fe(3+); the oligomeric form but not the monomeric form has in vitro ferroxidase activity. May be able to store large amounts of iron in the form of a ferrihydrite mineral by oligomerization; however, the physiological relevance is unsure as reports are conflicting and the function has only been shown using heterologous overexpression systems. May function as an iron chaperone protein that protects the aconitase [4Fe-4S]2+ cluster from disassembly and promotes enzyme reactivation. May play a role as a high affinity iron binding partner for FECH that is capable of both delivering iron to ferrochelatase and mediating the terminal step in mitochondrial heme biosynthesis. Functionally, modulates the RNA-binding activity of ACO1. May be involved in the cytoplasmic iron-sulfur protein biogenesis. May contribute to oxidative stress resistance and overall cell survival. In Mus musculus (Mouse), this protein is Frataxin, mitochondrial.